The following is a 180-amino-acid chain: Bifunctional protein PyrR (180 aa).

A PRPP-binding motif is present at residues 101-113 (VVLVDDVIFKGRT).

The protein belongs to the purine/pyrimidine phosphoribosyltransferase family. PyrR subfamily.

It carries out the reaction UMP + diphosphate = 5-phospho-alpha-D-ribose 1-diphosphate + uracil. Its function is as follows. Regulates the transcription of the pyrimidine nucleotide (pyr) operon in response to exogenous pyrimidines. Functionally, also displays a weak uracil phosphoribosyltransferase activity which is not physiologically significant. This chain is Bifunctional protein PyrR, found in Trichormus variabilis (strain ATCC 29413 / PCC 7937) (Anabaena variabilis).